Here is a 218-residue protein sequence, read N- to C-terminus: Adenylate kinase (218 aa).

Position 10–15 (10–15 (GAGKGT)) interacts with ATP. The interval 30–59 (STGDMLRAAVKAGTPLGQQAKAVMDAGQLV) is NMP. AMP contacts are provided by residues Thr31, Arg36, 57–59 (QLV), 85–88 (GFPR), and Gln92. Residues 122–159 (GRRSHPASGRTYHVKFNPPKVEGQDDVTGEPLVQREDD) are LID. ATP-binding positions include Arg123 and 132–133 (TY). The segment at 127-151 (PASGRTYHVKFNPPKVEGQDDVTGE) is disordered. Residues Arg156 and Arg167 each coordinate AMP. Residue Gly203 participates in ATP binding.

The protein belongs to the adenylate kinase family. Monomer.

Its subcellular location is the cytoplasm. The enzyme catalyses AMP + ATP = 2 ADP. Its pathway is purine metabolism; AMP biosynthesis via salvage pathway; AMP from ADP: step 1/1. In terms of biological role, catalyzes the reversible transfer of the terminal phosphate group between ATP and AMP. Plays an important role in cellular energy homeostasis and in adenine nucleotide metabolism. In Delftia acidovorans (strain DSM 14801 / SPH-1), this protein is Adenylate kinase.